Here is a 128-residue protein sequence, read N- to C-terminus: UPF0325 protein YaeH (128 aa).

Belongs to the UPF0325 family.

The protein is UPF0325 protein YaeH of Escherichia coli (strain ATCC 8739 / DSM 1576 / NBRC 3972 / NCIMB 8545 / WDCM 00012 / Crooks).